Reading from the N-terminus, the 849-residue chain is Autoinducer 1 sensor kinase/phosphatase LuxN (849 aa).

A run of 7 helical transmembrane segments spans residues 9 to 29 (IVYA…MWLF), 41 to 61 (VIFG…IAWI), 160 to 180 (SYFF…LVAM), 196 to 216 (IAGI…MTYF), 220 to 242 (FSLT…YALL), 251 to 275 (YIAY…AIFI), and 283 to 301 (WLIA…QLLY). One can recognise a Histidine kinase domain in the interval 468-683 (SIAHEMRNPL…EFHLYFPVVP (216 aa)). The residue at position 471 (His471) is a Phosphohistidine; by autocatalysis. Positions 722 to 835 (TVLIVDDKEV…ALRHVLGNWL (114 aa)) constitute a Response regulatory domain. Position 771 is a 4-aspartylphosphate (Asp771).

The protein resides in the cell inner membrane. It catalyses the reaction ATP + protein L-histidine = ADP + protein N-phospho-L-histidine.. Functionally, at low cell density, in the absence of AI-1 (autoinducer 1), LuxN has a kinase activity and autophosphorylates on His-471. The phosphoryl group is then transferred on Asp-771 of the response regulator domain. The phosphoryl group is transferred to LuxU, and ultimately to LuxO. At high cell density, in the presence of AI-1, the kinase activity is inactivated, and the response regulator domain has a phosphatase activity. LuxN phosphatase acts on itself. As LuxU could function to establish an equilibrium between the aspartyl-phosphate of LuxN and the aspartyl-phosphate of LuxO, LuxU transfers phosphate from LuxO to LuxN and finally phosphate is drained from the system. This is Autoinducer 1 sensor kinase/phosphatase LuxN (luxN) from Vibrio harveyi (Beneckea harveyi).